A 327-amino-acid polypeptide reads, in one-letter code: Petrobactin synthase (327 aa).

The catalysed reaction is N(8)-citryl-spermidine + 3,4-dihydroxybenzoyl-[aryl-carrier protein] = N(1)-(3,4-dihydroxybenzoyl)-N(8)-citryl-spermidine + holo-[aryl-carrier protein] + H(+). It catalyses the reaction N(8),N'(8)-citryl-bis(spermidine) + 3,4-dihydroxybenzoyl-[aryl-carrier protein] = N(1)-(3,4-dihydroxybenzoyl)-N(8),N'(8)-citryl-bis(spermidine) + holo-[aryl-carrier protein] + H(+). It carries out the reaction N(1)-(3,4-dihydroxybenzoyl)-N(8),N'(8)-citryl-bis(spermidine) + 3,4-dihydroxybenzoyl-[aryl-carrier protein] = petrobactin + holo-[aryl-carrier protein] + H(+). It participates in siderophore biosynthesis; petrobactin biosynthesis. Functionally, involved in the biosynthesis of petrobactin, a catecholate siderophore that functions in both iron acquisition and virulence. Transfers the activated 3,4-dihydroxybenzoate (3,4-DHBA) moiety from 3,4-DHBA-loaded AsbD to different receipient molecules, including N-citryl-spermidine, N8,N'8-citryl-bis(spermidine) and N1-(3,4-dihydroxybenzoyl)-N8,N'8-citryl-bis(spermidine). Also catalyzes the transfer of the activated 3,4-DHBA moiety from 3,4-DHBA-loaded AsbD to spermidine to generate DHB-spermidine (DHB-SP). In Bacillus anthracis, this protein is Petrobactin synthase.